The following is a 178-amino-acid chain: ATP synthase subunit delta (178 aa).

This sequence belongs to the ATPase delta chain family. F-type ATPases have 2 components, F(1) - the catalytic core - and F(0) - the membrane proton channel. F(1) has five subunits: alpha(3), beta(3), gamma(1), delta(1), epsilon(1). F(0) has three main subunits: a(1), b(2) and c(10-14). The alpha and beta chains form an alternating ring which encloses part of the gamma chain. F(1) is attached to F(0) by a central stalk formed by the gamma and epsilon chains, while a peripheral stalk is formed by the delta and b chains.

The protein localises to the cell membrane. Functionally, f(1)F(0) ATP synthase produces ATP from ADP in the presence of a proton or sodium gradient. F-type ATPases consist of two structural domains, F(1) containing the extramembraneous catalytic core and F(0) containing the membrane proton channel, linked together by a central stalk and a peripheral stalk. During catalysis, ATP synthesis in the catalytic domain of F(1) is coupled via a rotary mechanism of the central stalk subunits to proton translocation. This protein is part of the stalk that links CF(0) to CF(1). It either transmits conformational changes from CF(0) to CF(1) or is implicated in proton conduction. This is ATP synthase subunit delta from Streptococcus pyogenes serotype M3 (strain ATCC BAA-595 / MGAS315).